We begin with the raw amino-acid sequence, 151 residues long: Small ribosomal subunit protein uS15 (151 aa).

Phosphoserine occurs at positions 21 and 32.

Belongs to the universal ribosomal protein uS15 family. Component of the small ribosomal subunit (SSU). Mature yeast ribosomes consist of a small (40S) and a large (60S) subunit. The 40S small subunit contains 1 molecule of ribosomal RNA (18S rRNA) and at least 33 different proteins. The large 60S subunit contains 3 rRNA molecules (25S, 5.8S and 5S rRNA) and at least 46 different proteins.

Its subcellular location is the cytoplasm. Its function is as follows. Component of the ribosome, a large ribonucleoprotein complex responsible for the synthesis of proteins in the cell. The small ribosomal subunit (SSU) binds messenger RNAs (mRNAs) and translates the encoded message by selecting cognate aminoacyl-transfer RNA (tRNA) molecules. The large subunit (LSU) contains the ribosomal catalytic site termed the peptidyl transferase center (PTC), which catalyzes the formation of peptide bonds, thereby polymerizing the amino acids delivered by tRNAs into a polypeptide chain. The nascent polypeptides leave the ribosome through a tunnel in the LSU and interact with protein factors that function in enzymatic processing, targeting, and the membrane insertion of nascent chains at the exit of the ribosomal tunnel. This is Small ribosomal subunit protein uS15 (rps13) from Schizosaccharomyces pombe (strain 972 / ATCC 24843) (Fission yeast).